Reading from the N-terminus, the 711-residue chain is Ribosomal RNA large subunit methyltransferase K/L (711 aa).

One can recognise a THUMP domain in the interval 43 to 154 (TLYRTLLWSR…RENLVISLDL (112 aa)).

The protein belongs to the methyltransferase superfamily. RlmKL family.

It localises to the cytoplasm. It carries out the reaction guanosine(2445) in 23S rRNA + S-adenosyl-L-methionine = N(2)-methylguanosine(2445) in 23S rRNA + S-adenosyl-L-homocysteine + H(+). It catalyses the reaction guanosine(2069) in 23S rRNA + S-adenosyl-L-methionine = N(2)-methylguanosine(2069) in 23S rRNA + S-adenosyl-L-homocysteine + H(+). Functionally, specifically methylates the guanine in position 2445 (m2G2445) and the guanine in position 2069 (m7G2069) of 23S rRNA. This Haemophilus influenzae (strain PittEE) protein is Ribosomal RNA large subunit methyltransferase K/L.